The following is a 723-amino-acid chain: Host cell factor 2 (723 aa).

Kelch repeat units lie at residues 34 to 79, 83 to 130, 207 to 255, and 257 to 305; these read LMII…GFVC, RILV…RLGH, KMYV…VIGN, and MYIF…DSQE. Fibronectin type-III domains are found at residues 357–436, 516–606, and 608–720; these read PPAP…ANCT, TPSN…TCIP, and FPGA…SKKA. A disordered region spans residues 398 to 472; the sequence is AASPDASAAP…VALHSPLAPN (75 aa). A compositionally biased stretch (polar residues) spans 419–433; the sequence is QGSNSILHNSVSDPA.

In terms of assembly, binds KMT2A/MLL1. Component of the MLL1/MLL complex, at least composed of KMT2A/MLL1, ASH2L, RBBP5, DPY30, WDR5, MEN1, HCFC1 and HCFC2. Interacts with TASOR.

It localises to the cytoplasm. The protein localises to the nucleus. The chain is Host cell factor 2 (Hcfc2) from Rattus norvegicus (Rat).